Reading from the N-terminus, the 205-residue chain is Ypt/Rab-type GTPase Rab7 (205 aa).

Residues 17 to 23 (SGVGKTS), 33 to 40 (FSASYKAT), Gly66, 125 to 128 (NKID), and 157 to 159 (SAK) contribute to the GTP site. The short motif at 37 to 45 (YKATIGADF) is the Effector region element. S-geranylgeranyl cysteine attachment occurs at residues Cys203 and Cys205. Cysteine methyl ester is present on Cys205.

It belongs to the small GTPase superfamily. Rab family.

The protein localises to the cell membrane. Its activity is regulated as follows. Alternates between an inactive form bound to GDP and an active form bound to GTP. Activated by guanine nucleotide-exchange factors (GEFs), and inactivated by GTPase-activating proteins (GAPs). In terms of biological role, ypt/Rab-type GTPases are key regulators of membrane trafficking and intracellular vesicular transport. They act as molecular switches that convert between GTP-bound and GDP-bound states, and regulate virtually all steps of membrane traffic from the formation of the transport vesicle at the donor membrane to its fusion at the target membrane. In the GDP-bound state, Ypt proteins are predominantly cytosolic, solubilized through the interaction with a GDP dissociation inhibitor (GDI). In the GTP-bound state, the proteins are membrane bound and interact with specific effector proteins that select cargo, promote vesicle movement, or verify the correct site of fusion. In Neurospora crassa (strain ATCC 24698 / 74-OR23-1A / CBS 708.71 / DSM 1257 / FGSC 987), this protein is Ypt/Rab-type GTPase Rab7 (gtp-14).